The chain runs to 182 residues: Adenine phosphoribosyltransferase (182 aa).

It belongs to the purine/pyrimidine phosphoribosyltransferase family. As to quaternary structure, homodimer.

The protein localises to the cytoplasm. It catalyses the reaction AMP + diphosphate = 5-phospho-alpha-D-ribose 1-diphosphate + adenine. It participates in purine metabolism; AMP biosynthesis via salvage pathway; AMP from adenine: step 1/1. Its function is as follows. Catalyzes a salvage reaction resulting in the formation of AMP, that is energically less costly than de novo synthesis. The sequence is that of Adenine phosphoribosyltransferase from Campylobacter jejuni subsp. doylei (strain ATCC BAA-1458 / RM4099 / 269.97).